A 122-amino-acid polypeptide reads, in one-letter code: Large ribosomal subunit protein uL18 (122 aa).

It belongs to the universal ribosomal protein uL18 family. As to quaternary structure, part of the 50S ribosomal subunit; part of the 5S rRNA/L5/L18/L25 subcomplex. Contacts the 5S and 23S rRNAs.

This is one of the proteins that bind and probably mediate the attachment of the 5S RNA into the large ribosomal subunit, where it forms part of the central protuberance. The chain is Large ribosomal subunit protein uL18 from Trichlorobacter lovleyi (strain ATCC BAA-1151 / DSM 17278 / SZ) (Geobacter lovleyi).